The sequence spans 207 residues: MSLNYIKNFYEGCLRPPTVIGQFHTLFFGSVRTFFLGVLGFAVYGNEALHFSCDPDKRELNLYCYNQFRPITPQVFWALQLVTVLVPGAVFHLYAACKNIDQEEILHRPMSTVFYIISVLLRIILEVLAFWLQSHLFGFLVDPIFMCDVTGLGKILNVSKCMVPEHFEKTIFLSAMYTFTIITILLCIAEIFEILFRRLGYLNQPMT.

Residues 1 to 22 (MSLNYIKNFYEGCLRPPTVIGQ) lie on the Cytoplasmic side of the membrane. Residues 23–43 (FHTLFFGSVRTFFLGVLGFAV) form a helical membrane-spanning segment. At 44–74 (YGNEALHFSCDPDKRELNLYCYNQFRPITPQ) the chain is on the extracellular side. Intrachain disulfides connect Cys-53–Cys-161 and Cys-64–Cys-147. A helical transmembrane segment spans residues 75–95 (VFWALQLVTVLVPGAVFHLYA). At 96-111 (ACKNIDQEEILHRPMS) the chain is on the cytoplasmic side. Residues 112–132 (TVFYIISVLLRIILEVLAFWL) traverse the membrane as a helical segment. At 133-175 (QSHLFGFLVDPIFMCDVTGLGKILNVSKCMVPEHFEKTIFLSA) the chain is on the extracellular side. Residues 176–196 (MYTFTIITILLCIAEIFEILF) form a helical membrane-spanning segment. Over 197–207 (RRLGYLNQPMT) the chain is Cytoplasmic.

It belongs to the connexin family. Beta-type (group I) subfamily. A connexon is composed of a hexamer of connexins.

Its subcellular location is the cell membrane. Its function is as follows. Has significant hemichannel activity. However, has only low-efficiency gap junction activity and probably does not function as a gap junction channel in vivo. This chain is Gap junction epsilon-1 protein, found in Danio rerio (Zebrafish).